The primary structure comprises 561 residues: MITSQGSVSFRDVTVGFTQEEWQHLDPAQRTLYRDVMLENYSHLVSVGYCIPKPEVILKLEKGEEPWILEEKFPSQSHLELINTSRNYSIMKFNEFNKGGKCFCDEKHEIIHSEEEPSEYNKNGNSFWLNEDLIWHQKIKNWEQSFEYNECGKAFPENSLFLVHKRGYTGQKTCKYTEHGKTCDMSFFITHQQTHPRENHYGNECGENIFEESILLEHQSVYPFSQKLNLTPIQRTHSINNIIEYNECGTFFSEKLVLHLQQRTHTGEKPYECHECGKTFTQKSAHTRHQRTHTGGKPYECHECGKTFYKNSDLIKHQRIHTGERPYGCHECGKSFSEKSTLTQHQRTHTGEKPYECHECGKTFSFKSVLTVHQKTHTGEKPYECYACGKAFLRKSDLIKHQRIHTGEKPYECNECGKSFSEKSTLTKHLRTHTGEKPYECIQCGKFFCYYSGFTEHLRRHTGEKPFGCNECGKTFRQKSALIVHQRTHIRQKPYGCNQCGKSFCVKSKLIAHHRTHTGEKPYECNVCGKSFYVKSKLTVHQRIHLGRNPINVVNEGNYSG.

The region spanning 8–79 (VSFRDVTVGF…EEKFPSQSHL (72 aa)) is the KRAB domain. Residues 146–168 (FEYNECGKAFPENSLFLVHKRGY) form a C2H2-type 1; degenerate zinc finger. The C2H2-type 2; degenerate zinc finger occupies 243 to 265 (IEYNECGTFFSEKLVLHLQQRTH). C2H2-type zinc fingers lie at residues 271 to 293 (YECHECGKTFTQKSAHTRHQRTH), 299 to 321 (YECHECGKTFYKNSDLIKHQRIH), 327 to 349 (YGCHECGKSFSEKSTLTQHQRTH), 355 to 377 (YECHECGKTFSFKSVLTVHQKTH), 383 to 405 (YECYACGKAFLRKSDLIKHQRIH), 411 to 433 (YECNECGKSFSEKSTLTKHLRTH), 439 to 461 (YECIQCGKFFCYYSGFTEHLRRH), 467 to 489 (FGCNECGKTFRQKSALIVHQRTH), 495 to 517 (YGCNQCGKSFCVKSKLIAHHRTH), and 523 to 545 (YECNVCGKSFYVKSKLTVHQRIH).

This sequence belongs to the krueppel C2H2-type zinc-finger protein family.

Its subcellular location is the nucleus. Its function is as follows. May be involved in transcriptional regulation. This Homo sapiens (Human) protein is Zinc finger protein 37A (ZNF37A).